Reading from the N-terminus, the 60-residue chain is Protein AC4 (60 aa).

It belongs to the geminiviridae protein AC4/C4 family.

Its function is as follows. Pathogenicity determinant. May act as a suppressor of RNA-mediated gene silencing, also known as post-transcriptional gene silencing (PTGS), a mechanism of plant viral defense that limits the accumulation of viral RNAs. This chain is Protein AC4, found in Pepper huasteco yellow vein virus (PHYVV).